Here is a 759-residue protein sequence, read N- to C-terminus: LIM domain and actin-binding protein 1 (759 aa).

At Met-1 the chain carries N-acetylmethionine. 3 positions are modified to phosphoserine: Ser-4, Ser-15, and Ser-55. The disordered stretch occupies residues 78 to 131; it reads NPGLGAESHTDSLRNSSTEIRHRADHPPAEVTSHAASGAKADQEEQIHPRSRLR. Basic and acidic residues predominate over residues 96–105; the sequence is EIRHRADHPP. A Phosphoserine modification is found at Ser-132. Residues 146 to 177 are compositionally biased toward basic and acidic residues; it reads KDGEDLKDHSTESKKMENCLGESRHEVEKSEI. A disordered region spans residues 146-182; the sequence is KDGEDLKDHSTESKKMENCLGESRHEVEKSEISENTD. The Required for interaction with NPC1L1 motif lies at 164–166; that stretch reads CLG. Phosphoserine occurs at positions 183 and 225. Disordered regions lie at residues 211–264 and 323–381; these read ILRA…RLSE and EKIS…AMKK. Tyr-229 is subject to Phosphotyrosine. Residues Ser-230 and Ser-242 each carry the phosphoserine modification. A compositionally biased stretch (basic and acidic residues) spans 247–258; the sequence is DSEKNESRRNLE. Residues Ser-263, Ser-343, Ser-350, Ser-362, Ser-365, Ser-369, and Ser-374 each carry the phosphoserine modification. The segment covering 362–376 has biased composition (low complexity); the sequence is SPDSRASSLSESSPP. Residues 388-448 enclose the LIM zinc-binding domain; the sequence is ETCVECQKTV…KPHFNQLFKS (61 aa). Position 439 is an N6-succinyllysine (Lys-439). Ser-490 bears the Phosphoserine mark. The interval 493–513 is required for interaction with MYO5B; that stretch reads VEDAPIAKVGVLAASMEAKAS. Residues 509–709 form a disordered region; it reads EAKASSQQEK…QEPKSLNWSS (201 aa). Composition is skewed to basic and acidic residues over residues 516–527 and 556–567; these read QEKEDKPAETKK and WPPEDEISKPEV. Residues 595-607 are compositionally biased toward polar residues; the sequence is ASFQSTSVKSPKT. Residues Ser-601, Ser-604, Ser-609, and Ser-617 each carry the phosphoserine modification. A compositionally biased stretch (polar residues) spans 644 to 655; the sequence is KNGNVGKTTWQN. Positions 656–673 are enriched in basic and acidic residues; that stretch reads KESKGETGKRSKEGHSLE. The span at 674–691 shows a compositional bias: acidic residues; the sequence is MENENLVENGADSDEDDN. A phosphoserine mark is found at Ser-686, Ser-692, Ser-698, Ser-726, and Ser-741. The segment covering 693–709 has biased composition (polar residues); sequence FLKQQSPQEPKSLNWSS.

In terms of assembly, interacts with NPC1L1; bridges NPC1L1 with MYO5B. Interacts with MYO5B; bridges NPC1L1 with MYO5B. Interacts with PXN; this complex stabilizes actin dynamics. Interacts with F-actin and G-actin. Interacts with LUZP1 (via C-terminus); both proteins restrict ciliation and may work together to regulate this process. Binds RAB40B (GTP-bound); interaction influences LIMA1 subcellular localization in lamellipodia during cell migration. In terms of processing, ubiquitinated by the ECS(RAB40B) complex leading to its degradation. Post-translationally, phosphorylation of the C-terminal region by MAPK1/MAPK3 reduces its association with F-actin and contributes to actin filament reorganization and enhances cell motility. As to expression, highly expressed in placenta, kidney, pancreas, prostate, ovary, spleen and heart. Also detected in lung, liver, brain, skeletal muscle, thymus, testis and intestine. Not detected in leukocytes. Isoform Beta expressed generally at very low levels. Isoform Alpha abundant in epithelial cells from mammary gland, prostate and in normal oral keratinocytes. Low levels in aortic endothelial cells and dermal fibroblasts. Not detectable in myocardium.

It localises to the cytoplasm. The protein resides in the cell junction. It is found in the focal adhesion. Its subcellular location is the cytoskeleton. The protein localises to the stress fiber. It localises to the cell membrane. The protein resides in the cell projection. It is found in the ruffle. Its subcellular location is the lamellipodium. In terms of biological role, actin-binding protein involved in actin cytoskeleton regulation and dynamics. Increases the number and size of actin stress fibers and inhibits membrane ruffling. Inhibits actin filament depolymerization. Bundles actin filaments, delays filament nucleation and reduces formation of branched filaments. Acts as a negative regulator of primary cilium formation. Plays a role in cholesterol homeostasis. Influences plasma cholesterol levels through regulation of intestinal cholesterol absorption. May act as a scaffold protein by regulating NPC1L1 transportation, an essential protein for cholesterol absorption, to the plasma membrane by recruiting MYO5B to NPC1L1, and thus facilitates cholesterol uptake. The sequence is that of LIM domain and actin-binding protein 1 from Homo sapiens (Human).